A 332-amino-acid polypeptide reads, in one-letter code: RING-H2 finger protein ATL81 (332 aa).

An N-terminal signal peptide occupies residues 1 to 19 (MYDLTFLLISLFPIDITLP). A helical membrane pass occupies residues 76–96 (IVLTGSLLFIIFTGFFSFFFC). The RING-type; atypical zinc finger occupies 154-196 (CSICLTEFMDDDTIRLISTCNHSFHTICIDLWFEGHKTCPVCR).

Belongs to the RING-type zinc finger family. ATL subfamily.

Its subcellular location is the membrane. It carries out the reaction S-ubiquitinyl-[E2 ubiquitin-conjugating enzyme]-L-cysteine + [acceptor protein]-L-lysine = [E2 ubiquitin-conjugating enzyme]-L-cysteine + N(6)-ubiquitinyl-[acceptor protein]-L-lysine.. Its pathway is protein modification; protein ubiquitination. This is RING-H2 finger protein ATL81 (ATL81) from Arabidopsis thaliana (Mouse-ear cress).